The following is a 310-amino-acid chain: MNKVNILPSDTNMKITLFSELSVGISANSILFFAHLCMFFEENRSKPIDLCIAFLSLTQLMLLVTMGLIAADMFMAQGIWDITTCRSLIYFHRLLRGFNLCAACLLHILWTFTLSPRSSCLTKFKHKSPHHISGAYLFFCVLYMSFSSHLFVLVIATSNLTSDHFMYVTQSCSLLPMSYSRTSTFSLLMVTREVFLISLMALSSGYMVTLLWRHKKQAQHLHSTRLSSKASPQQRATRTILLLMTFFVVFYILGTVIFHSRTKFKDGSIFYCVQIIVSHSYATISPFVFVFSEKRIIKFFRSMCGRIVNT.

The Extracellular portion of the chain corresponds to 1 to 19 (MNKVNILPSDTNMKITLFS). Residues 20-40 (ELSVGISANSILFFAHLCMFF) form a helical membrane-spanning segment. Topologically, residues 41 to 49 (EENRSKPID) are cytoplasmic. A helical membrane pass occupies residues 50–70 (LCIAFLSLTQLMLLVTMGLIA). The Extracellular portion of the chain corresponds to 71–93 (ADMFMAQGIWDITTCRSLIYFHR). Residues cysteine 85 and cysteine 172 are joined by a disulfide bond. The chain crosses the membrane as a helical span at residues 94 to 114 (LLRGFNLCAACLLHILWTFTL). Residues 115-134 (SPRSSCLTKFKHKSPHHISG) are Cytoplasmic-facing. A helical membrane pass occupies residues 135 to 155 (AYLFFCVLYMSFSSHLFVLVI). At 156–193 (ATSNLTSDHFMYVTQSCSLLPMSYSRTSTFSLLMVTRE) the chain is on the extracellular side. Residue asparagine 159 is glycosylated (N-linked (GlcNAc...) asparagine). A helical membrane pass occupies residues 194 to 214 (VFLISLMALSSGYMVTLLWRH). At 215–238 (KKQAQHLHSTRLSSKASPQQRATR) the chain is on the cytoplasmic side. Residues 239-259 (TILLLMTFFVVFYILGTVIFH) form a helical membrane-spanning segment. At 260–268 (SRTKFKDGS) the chain is on the extracellular side. Residues 269-289 (IFYCVQIIVSHSYATISPFVF) traverse the membrane as a helical segment. Topologically, residues 290-310 (VFSEKRIIKFFRSMCGRIVNT) are cytoplasmic.

The protein belongs to the G-protein coupled receptor 1 family. As to expression, expressed in 1-4% of neurons of the vomeronasal organ. Only one pheromone receptor gene may be expressed in a particular neuron. Not expressed in the main olfactory epithelium.

It is found in the cell membrane. In terms of biological role, putative pheromone receptor implicated in the regulation of social as well as reproductive behavior. The polypeptide is Vomeronasal type-1 receptor 101 (Vom1r101) (Rattus norvegicus (Rat)).